A 541-amino-acid chain; its full sequence is Glucose-6-phosphate isomerase (541 aa).

E347 acts as the Proton donor in catalysis. Active-site residues include H378 and K506.

The protein belongs to the GPI family.

Its subcellular location is the cytoplasm. The catalysed reaction is alpha-D-glucose 6-phosphate = beta-D-fructose 6-phosphate. Its pathway is carbohydrate biosynthesis; gluconeogenesis. The protein operates within carbohydrate degradation; glycolysis; D-glyceraldehyde 3-phosphate and glycerone phosphate from D-glucose: step 2/4. Functionally, catalyzes the reversible isomerization of glucose-6-phosphate to fructose-6-phosphate. The protein is Glucose-6-phosphate isomerase of Francisella tularensis subsp. holarctica (strain OSU18).